The following is a 62-amino-acid chain: Large ribosomal subunit protein eL24 (62 aa).

Zn(2+)-binding residues include Cys-6, Cys-9, Cys-32, and Cys-36. The segment at Cys-6–Cys-36 adopts a C4-type zinc-finger fold.

It belongs to the eukaryotic ribosomal protein eL24 family. As to quaternary structure, part of the 50S ribosomal subunit. Forms a cluster with proteins L3 and L14. The cofactor is Zn(2+).

In terms of biological role, binds to the 23S rRNA. In Methanococcus maripaludis (strain C7 / ATCC BAA-1331), this protein is Large ribosomal subunit protein eL24.